Reading from the N-terminus, the 170-residue chain is Large ribosomal subunit protein uL18m (170 aa).

This sequence belongs to the universal ribosomal protein uL18 family. As to quaternary structure, component of the mitochondrial ribosome large subunit (39S) which comprises a 16S rRNA and about 50 distinct proteins.

The protein localises to the mitochondrion. The protein is Large ribosomal subunit protein uL18m (mrpl-18) of Caenorhabditis elegans.